The sequence spans 486 residues: Galactose-1-phosphate uridylyltransferase (486 aa).

This sequence belongs to the galactose-1-phosphate uridylyltransferase type 2 family.

It localises to the cytoplasm. The enzyme catalyses alpha-D-galactose 1-phosphate + UDP-alpha-D-glucose = alpha-D-glucose 1-phosphate + UDP-alpha-D-galactose. The protein operates within carbohydrate metabolism; galactose metabolism. In Pediococcus pentosaceus (strain ATCC 25745 / CCUG 21536 / LMG 10740 / 183-1w), this protein is Galactose-1-phosphate uridylyltransferase.